The sequence spans 238 residues: 2-C-methyl-D-erythritol 4-phosphate cytidylyltransferase (238 aa).

Belongs to the IspD/TarI cytidylyltransferase family. IspD subfamily.

The enzyme catalyses 2-C-methyl-D-erythritol 4-phosphate + CTP + H(+) = 4-CDP-2-C-methyl-D-erythritol + diphosphate. Its pathway is isoprenoid biosynthesis; isopentenyl diphosphate biosynthesis via DXP pathway; isopentenyl diphosphate from 1-deoxy-D-xylulose 5-phosphate: step 2/6. In terms of biological role, catalyzes the formation of 4-diphosphocytidyl-2-C-methyl-D-erythritol from CTP and 2-C-methyl-D-erythritol 4-phosphate (MEP). The polypeptide is 2-C-methyl-D-erythritol 4-phosphate cytidylyltransferase (Salinibacter ruber (strain DSM 13855 / M31)).